Reading from the N-terminus, the 460-residue chain is Argininosuccinate lyase (460 aa).

The protein belongs to the lyase 1 family. Argininosuccinate lyase subfamily.

It is found in the cytoplasm. It carries out the reaction 2-(N(omega)-L-arginino)succinate = fumarate + L-arginine. It functions in the pathway amino-acid biosynthesis; L-arginine biosynthesis; L-arginine from L-ornithine and carbamoyl phosphate: step 3/3. This chain is Argininosuccinate lyase, found in Maridesulfovibrio salexigens (strain ATCC 14822 / DSM 2638 / NCIMB 8403 / VKM B-1763) (Desulfovibrio salexigens).